The following is a 268-amino-acid chain: Protein CONTINUOUS VASCULAR RING 1 (268 aa).

The Cytoplasmic portion of the chain corresponds to Met-1–Gly-70. The interval Ile-21 to His-48 is disordered. Positions Ser-34–His-48 are enriched in low complexity. Residues Cys-71–Val-91 form a helical membrane-spanning segment. Topologically, residues Asp-92–Gly-103 are extracellular. The chain crosses the membrane as a helical span at residues Ile-104 to Phe-124. Topologically, residues Met-125–Leu-268 are cytoplasmic.

This sequence belongs to the plant COV1 protein family. As to expression, mostly expressed in flowers and stems, and, to a lower extent, in roots and leaves.

The protein localises to the membrane. Its function is as follows. Involved in the regulation of vascular patterning in the stem, probably by negatively regulating the differentiation of vascular tissue. In Arabidopsis thaliana (Mouse-ear cress), this protein is Protein CONTINUOUS VASCULAR RING 1.